Consider the following 235-residue polypeptide: Probable RNA 2'-phosphotransferase (235 aa).

This sequence belongs to the KptA/TPT1 family.

Removes the 2'-phosphate from RNA via an intermediate in which the phosphate is ADP-ribosylated by NAD followed by a presumed transesterification to release the RNA and generate ADP-ribose 1''-2''-cyclic phosphate (APPR&gt;P). May function as an ADP-ribosylase. This is Probable RNA 2'-phosphotransferase from Thermoplasma volcanium (strain ATCC 51530 / DSM 4299 / JCM 9571 / NBRC 15438 / GSS1).